Here is a 900-residue protein sequence, read N- to C-terminus: Translation initiation factor IF-2 (900 aa).

The span at Leu80–Arg95 shows a compositional bias: basic and acidic residues. Disordered regions lie at residues Leu80–Arg106, Ala149–Val169, and Asp221–Lys268. The segment covering Gly253–Lys262 has biased composition (basic residues). In terms of domain architecture, tr-type G spans Thr397 to Lys567. The segment at Gly406–Thr413 is G1. A GTP-binding site is contributed by Gly406–Thr413. The segment at Gly431–His435 is G2. The segment at Asp453 to Gly456 is G3. Residues Asp453–His457 and Asn507–Asp510 contribute to the GTP site. The interval Asn507–Asp510 is G4. Residues Ser543–Lys545 form a G5 region.

The protein belongs to the TRAFAC class translation factor GTPase superfamily. Classic translation factor GTPase family. IF-2 subfamily.

It localises to the cytoplasm. Functionally, one of the essential components for the initiation of protein synthesis. Protects formylmethionyl-tRNA from spontaneous hydrolysis and promotes its binding to the 30S ribosomal subunits. Also involved in the hydrolysis of GTP during the formation of the 70S ribosomal complex. In Chlorobium phaeovibrioides (strain DSM 265 / 1930) (Prosthecochloris vibrioformis (strain DSM 265)), this protein is Translation initiation factor IF-2.